Reading from the N-terminus, the 361-residue chain is Collagenase (361 aa).

This sequence belongs to the peptidase U32 family. In terms of assembly, homodimer. The cofactor is a metal cation.

Activity somewhat enhanced by calcium ions, inhibited by zinc and Fe(3+) ions and by p-chloromercuribenzoic acid and EDTA. Activity is enhanced by salivary peptide cystatin and reduced by salivary peptide histatin. In terms of biological role, has collagenase activity. Active on soluble collagen, reconstituted type I collagen, heat denatured type I collagen and azocoll, but not gelatin or the synthetic bacterial collagenase substrate PZ-PLGPA. May play a role in virulence. The polypeptide is Collagenase (Porphyromonas gingivalis (Bacteroides gingivalis)).